The following is a 191-amino-acid chain: Cdc42 homolog (191 aa).

Gly-10–Thr-17 is a GTP binding site. The Effector region signature appears at Tyr-32 to Tyr-40. GTP-binding positions include Asp-57 to Gln-61 and Thr-115 to Asp-118. Residue Cys-188 is modified to Cysteine methyl ester. Residue Cys-188 is the site of S-geranylgeranyl cysteine attachment. Residues Lys-189–Leu-191 constitute a propeptide, removed in mature form.

This sequence belongs to the small GTPase superfamily. Rho family. CDC42 subfamily.

It localises to the cell junction. It is found in the adherens junction. Its subcellular location is the cell membrane. It catalyses the reaction GTP + H2O = GDP + phosphate + H(+). In terms of biological role, regulates mbt kinase activity and is also required to recruit mbt to adherens junctions. Together with mbt, regulates photoreceptor cell morphogenesis. The protein is Cdc42 homolog of Drosophila pseudoobscura pseudoobscura (Fruit fly).